The sequence spans 145 residues: 3-hydroxyacyl-[acyl-carrier-protein] dehydratase FabZ (145 aa).

His51 is an active-site residue.

The protein belongs to the thioester dehydratase family. FabZ subfamily.

It is found in the cytoplasm. The catalysed reaction is a (3R)-hydroxyacyl-[ACP] = a (2E)-enoyl-[ACP] + H2O. Involved in unsaturated fatty acids biosynthesis. Catalyzes the dehydration of short chain beta-hydroxyacyl-ACPs and long chain saturated and unsaturated beta-hydroxyacyl-ACPs. This Staphylococcus epidermidis (strain ATCC 35984 / DSM 28319 / BCRC 17069 / CCUG 31568 / BM 3577 / RP62A) protein is 3-hydroxyacyl-[acyl-carrier-protein] dehydratase FabZ.